Reading from the N-terminus, the 360-residue chain is UDP-N-acetylglucosamine--N-acetylmuramyl-(pentapeptide) pyrophosphoryl-undecaprenol N-acetylglucosamine transferase (360 aa).

Residues 12–14, Ser198, and Gln289 contribute to the UDP-N-acetyl-alpha-D-glucosamine site; that span reads TAG.

It belongs to the glycosyltransferase 28 family. MurG subfamily.

It localises to the cell membrane. The catalysed reaction is Mur2Ac(oyl-L-Ala-gamma-D-Glu-L-Lys-D-Ala-D-Ala)-di-trans,octa-cis-undecaprenyl diphosphate + UDP-N-acetyl-alpha-D-glucosamine = beta-D-GlcNAc-(1-&gt;4)-Mur2Ac(oyl-L-Ala-gamma-D-Glu-L-Lys-D-Ala-D-Ala)-di-trans,octa-cis-undecaprenyl diphosphate + UDP + H(+). Its pathway is cell wall biogenesis; peptidoglycan biosynthesis. Cell wall formation. Catalyzes the transfer of a GlcNAc subunit on undecaprenyl-pyrophosphoryl-MurNAc-pentapeptide (lipid intermediate I) to form undecaprenyl-pyrophosphoryl-MurNAc-(pentapeptide)GlcNAc (lipid intermediate II). The polypeptide is UDP-N-acetylglucosamine--N-acetylmuramyl-(pentapeptide) pyrophosphoryl-undecaprenol N-acetylglucosamine transferase (Streptococcus equi subsp. equi (strain 4047)).